We begin with the raw amino-acid sequence, 70 residues long: DNA-directed RNA polymerase subunit omega (70 aa).

Belongs to the RNA polymerase subunit omega family. The RNAP catalytic core consists of 2 alpha, 1 beta, 1 beta' and 1 omega subunit. When a sigma factor is associated with the core the holoenzyme is formed, which can initiate transcription.

The enzyme catalyses RNA(n) + a ribonucleoside 5'-triphosphate = RNA(n+1) + diphosphate. Functionally, promotes RNA polymerase assembly. Latches the N- and C-terminal regions of the beta' subunit thereby facilitating its interaction with the beta and alpha subunits. This chain is DNA-directed RNA polymerase subunit omega, found in Nitratiruptor sp. (strain SB155-2).